A 334-amino-acid chain; its full sequence is D-fructose 1,6-bisphosphatase class 2/sedoheptulose 1,7-bisphosphatase (334 aa).

Mn(2+)-binding residues include Asp33, Glu57, Asp85, and Glu88. Residues 88-90 (EGT), Tyr119, 164-166 (RAR), and 186-188 (DGD) each bind substrate. Mn(2+) is bound at residue Glu213.

It belongs to the FBPase class 2 family. In terms of assembly, homotetramer. It depends on Mn(2+) as a cofactor.

It carries out the reaction beta-D-fructose 1,6-bisphosphate + H2O = beta-D-fructose 6-phosphate + phosphate. It catalyses the reaction D-sedoheptulose 1,7-bisphosphate + H2O = D-sedoheptulose 7-phosphate + phosphate. It functions in the pathway carbohydrate biosynthesis; Calvin cycle. Catalyzes the hydrolysis of fructose 1,6-bisphosphate (Fru 1,6-P2) and sedoheptulose 1,7-bisphosphate (Sed 1,7-P2) to fructose 6-phosphate and sedoheptulose 7-phosphate, respectively. The chain is D-fructose 1,6-bisphosphatase class 2/sedoheptulose 1,7-bisphosphatase from Prochlorococcus marinus (strain MIT 9313).